We begin with the raw amino-acid sequence, 221 residues long: Germin-like protein subfamily 1 member 15 (221 aa).

An N-terminal signal peptide occupies residues 1–21 (MKVSMSLILITFWALVTIAKA). The cysteines at positions 31 and 48 are disulfide-linked. The Cupin type-1 domain maps to 62 to 213 (SGLNQAGITN…AFQLDVNVVK (152 aa)). Asn77 carries an N-linked (GlcNAc...) asparagine glycan. Mn(2+)-binding residues include His110, His112, Glu117, and His159.

Belongs to the germin family. Oligomer (believed to be a pentamer but probably hexamer).

The protein localises to the secreted. Its subcellular location is the extracellular space. It localises to the apoplast. May play a role in plant defense. Probably has no oxalate oxidase activity even if the active site is conserved. The sequence is that of Germin-like protein subfamily 1 member 15 from Arabidopsis thaliana (Mouse-ear cress).